A 148-amino-acid chain; its full sequence is Ubiquitin-conjugating enzyme E2 29 (148 aa).

Residues 1 to 147 (MATRRILKEL…ARSWTQKYAL (147 aa)) form the UBC core domain. C85 (glycyl thioester intermediate) is an active-site residue.

This sequence belongs to the ubiquitin-conjugating enzyme family.

The enzyme catalyses S-ubiquitinyl-[E1 ubiquitin-activating enzyme]-L-cysteine + [E2 ubiquitin-conjugating enzyme]-L-cysteine = [E1 ubiquitin-activating enzyme]-L-cysteine + S-ubiquitinyl-[E2 ubiquitin-conjugating enzyme]-L-cysteine.. Its pathway is protein modification; protein ubiquitination. Functionally, accepts the ubiquitin from the E1 complex and catalyzes its covalent attachment to other proteins. The sequence is that of Ubiquitin-conjugating enzyme E2 29 (UBC29) from Arabidopsis thaliana (Mouse-ear cress).